A 717-amino-acid polypeptide reads, in one-letter code: Polyribonucleotide nucleotidyltransferase (717 aa).

Positions 487 and 493 each coordinate Mg(2+). Residues 554–613 form the KH domain; the sequence is PKIITMAINPDKIRDVIGPSGKQINKIIEETGVKIDIEQDGTVFISSINQEMNEKAKKII. Positions 623–691 constitute an S1 motif domain; sequence GEIYLGKVKR…KQGRVNLSRK (69 aa).

The protein belongs to the polyribonucleotide nucleotidyltransferase family. Requires Mg(2+) as cofactor.

The protein localises to the cytoplasm. It carries out the reaction RNA(n+1) + phosphate = RNA(n) + a ribonucleoside 5'-diphosphate. In terms of biological role, involved in mRNA degradation. Catalyzes the phosphorolysis of single-stranded polyribonucleotides processively in the 3'- to 5'-direction. The chain is Polyribonucleotide nucleotidyltransferase from Bacillus mycoides (strain KBAB4) (Bacillus weihenstephanensis).